Consider the following 295-residue polypeptide: Fructose-bisphosphate aldolase class 1 (295 aa).

The active-site Proton acceptor is the E176. K213 serves as the catalytic Schiff-base intermediate with dihydroxyacetone-P.

The protein belongs to the class I fructose-bisphosphate aldolase family.

It carries out the reaction beta-D-fructose 1,6-bisphosphate = D-glyceraldehyde 3-phosphate + dihydroxyacetone phosphate. Its pathway is carbohydrate degradation; glycolysis; D-glyceraldehyde 3-phosphate and glycerone phosphate from D-glucose: step 4/4. The polypeptide is Fructose-bisphosphate aldolase class 1 (Clostridium beijerinckii (strain ATCC 51743 / NCIMB 8052) (Clostridium acetobutylicum)).